A 504-amino-acid chain; its full sequence is Maturase K (504 aa).

This sequence belongs to the intron maturase 2 family. MatK subfamily.

Its subcellular location is the plastid. It localises to the chloroplast. Its function is as follows. Usually encoded in the trnK tRNA gene intron. Probably assists in splicing its own and other chloroplast group II introns. The sequence is that of Maturase K from Vigna unguiculata (Cowpea).